The following is a 697-amino-acid chain: Elongation factor G (697 aa).

Residues 8-287 (ERVRNIGIAA…AVVDYLPAPT (280 aa)) form the tr-type G domain. GTP contacts are provided by residues 17-24 (AHIDAGKT), 81-85 (DTPGH), and 135-138 (NKMD).

This sequence belongs to the TRAFAC class translation factor GTPase superfamily. Classic translation factor GTPase family. EF-G/EF-2 subfamily.

It is found in the cytoplasm. Functionally, catalyzes the GTP-dependent ribosomal translocation step during translation elongation. During this step, the ribosome changes from the pre-translocational (PRE) to the post-translocational (POST) state as the newly formed A-site-bound peptidyl-tRNA and P-site-bound deacylated tRNA move to the P and E sites, respectively. Catalyzes the coordinated movement of the two tRNA molecules, the mRNA and conformational changes in the ribosome. The protein is Elongation factor G (fusA) of Arthrospira platensis (Spirulina platensis).